Reading from the N-terminus, the 162-residue chain is NADH-quinone oxidoreductase subunit I (162 aa).

4Fe-4S ferredoxin-type domains follow at residues 52 to 82 (LRRY…IEAG) and 93 to 122 (TRYD…EGPN). 8 residues coordinate [4Fe-4S] cluster: cysteine 62, cysteine 65, cysteine 68, cysteine 72, cysteine 102, cysteine 105, cysteine 108, and cysteine 112.

It belongs to the complex I 23 kDa subunit family. NDH-1 is composed of 14 different subunits. Subunits NuoA, H, J, K, L, M, N constitute the membrane sector of the complex. The cofactor is [4Fe-4S] cluster.

The protein localises to the cell inner membrane. It catalyses the reaction a quinone + NADH + 5 H(+)(in) = a quinol + NAD(+) + 4 H(+)(out). Its function is as follows. NDH-1 shuttles electrons from NADH, via FMN and iron-sulfur (Fe-S) centers, to quinones in the respiratory chain. The immediate electron acceptor for the enzyme in this species is believed to be ubiquinone. Couples the redox reaction to proton translocation (for every two electrons transferred, four hydrogen ions are translocated across the cytoplasmic membrane), and thus conserves the redox energy in a proton gradient. In Methylocella silvestris (strain DSM 15510 / CIP 108128 / LMG 27833 / NCIMB 13906 / BL2), this protein is NADH-quinone oxidoreductase subunit I.